We begin with the raw amino-acid sequence, 334 residues long: Glucokinase-like protein PD_0680 (334 aa).

Residue 18–23 (ADVGGT) coordinates ATP.

This sequence belongs to the bacterial glucokinase family.

This chain is Glucokinase-like protein PD_0680, found in Xylella fastidiosa (strain Temecula1 / ATCC 700964).